Consider the following 422-residue polypeptide: Signal recognition particle receptor FtsY (422 aa).

The interval 39 to 86 (PERGVVDRSGGYTASSGITFSQTPTTQPAERIDTSGLPAVGDDATVPR) is disordered. The segment covering 50–66 (YTASSGITFSQTPTTQP) has biased composition (polar residues). Residues 230–237 (GVNGTGKT), 312–316 (DTAGR), and 374–377 (TKLD) each bind GTP.

It belongs to the GTP-binding SRP family. FtsY subfamily. As to quaternary structure, part of the signal recognition particle protein translocation system, which is composed of SRP and FtsY.

Its subcellular location is the cell membrane. The protein resides in the cytoplasm. The catalysed reaction is GTP + H2O = GDP + phosphate + H(+). Functionally, involved in targeting and insertion of nascent membrane proteins into the cytoplasmic membrane. Acts as a receptor for the complex formed by the signal recognition particle (SRP) and the ribosome-nascent chain (RNC). The sequence is that of Signal recognition particle receptor FtsY from Mycobacterium bovis (strain ATCC BAA-935 / AF2122/97).